Consider the following 878-residue polypeptide: Phosphoenolpyruvate carboxylase (878 aa).

Residues His137 and Lys545 contribute to the active site.

The protein belongs to the PEPCase type 1 family. It depends on Mg(2+) as a cofactor.

It catalyses the reaction oxaloacetate + phosphate = phosphoenolpyruvate + hydrogencarbonate. Forms oxaloacetate, a four-carbon dicarboxylic acid source for the tricarboxylic acid cycle. The polypeptide is Phosphoenolpyruvate carboxylase (Proteus mirabilis (strain HI4320)).